Here is a 453-residue protein sequence, read N- to C-terminus: Ankyrin repeat and SOCS box protein 16 (453 aa).

ANK repeat units follow at residues 56–85 (CRDP…AANM), 110–139 (KQTA…ELDA), 142–171 (GGRA…KANV), 175–204 (EGMT…SVNV), 209–238 (SEVT…DVAL), 242–279 (QGET…DPQA), and 283–312 (KRHT…SPGV). In terms of domain architecture, SOCS box spans 397–453 (FYSSALSMENQPRQLQHLARLAVRAQLGSHCRQAAAQLPLPPLLRDYLLLGVEGRIQ).

The protein belongs to the ankyrin SOCS box (ASB) family.

The protein operates within protein modification; protein ubiquitination. May be a substrate-recognition component of a SCF-like ECS (Elongin-Cullin-SOCS-box protein) E3 ubiquitin-protein ligase complex which mediates the ubiquitination and subsequent proteasomal degradation of target proteins. This Mus musculus (Mouse) protein is Ankyrin repeat and SOCS box protein 16 (Asb16).